A 352-amino-acid chain; its full sequence is MAQTEAMAEIKQQALVDINEAQNEKALQDVKVKYLGKKGSVTGLMKHMKDLPNEEKPAYGQQVNEVRQTIEKEIQARHELLGNEQLEQQLKEEKIDVTLPSRKIAIGAKHPLTRTIEEIEDLFLGLGYEIVDGFEVEQDYYNFEALNLPKSHPARDMQDSFYITDEILMRTHTSPVQARTMEKRNGEGPVKILCPGKVYRRDSDDATHSHQFTQIEGLVVDENIKMSDLKGTLELLAKQLFGEDREIRLRPSYFPFTEPSVEVDVSCFKCKGEGCNVCKHTGWIEILGAGMVHPNVLEMAGFDSNKYTGFAFGMGPDRIAMLKYGIEDIRHFYTNDVRFLSQFKAVEDRGEK.

Mg(2+) is bound at residue Glu258.

The protein belongs to the class-II aminoacyl-tRNA synthetase family. Phe-tRNA synthetase alpha subunit type 1 subfamily. In terms of assembly, tetramer of two alpha and two beta subunits. Mg(2+) is required as a cofactor.

Its subcellular location is the cytoplasm. It catalyses the reaction tRNA(Phe) + L-phenylalanine + ATP = L-phenylalanyl-tRNA(Phe) + AMP + diphosphate + H(+). The chain is Phenylalanine--tRNA ligase alpha subunit from Staphylococcus saprophyticus subsp. saprophyticus (strain ATCC 15305 / DSM 20229 / NCIMB 8711 / NCTC 7292 / S-41).